We begin with the raw amino-acid sequence, 92 residues long: UPF0235 protein PYRAB05010 (92 aa).

Belongs to the UPF0235 family.

The sequence is that of UPF0235 protein PYRAB05010 from Pyrococcus abyssi (strain GE5 / Orsay).